The primary structure comprises 927 residues: Roc-COR-CHAT protease (927 aa).

4 LRR repeats span residues 38–61 (AGQV…TEAQ), 83–107 (LPHL…GFRS), 109–125 (QQVY…VFEG), and 127–151 (CPAL…GFRA). An LRR 5 region spans residues 152–170 (LKYIYATNNVLQKITFNRS). LRR repeat units lie at residues 171 to 194 (MRLL…LSEI) and 195 to 217 (ETME…IWDR). The COR domain maps to 436 to 623 (EWLGVKEDLN…ELRWKKGVVL (188 aa)). Catalysis depends on residues histidine 796 and cysteine 840.

Functionally, a dedicated protease for gasdermin bGSDM; cleaves the bGSDM precursor, releasing the pore-forming moiety, which integrates into the membrane and triggers cell death. Probably involved in defense against bacteriophages. Expression of bGSDM and this neighboring protease is highly toxic in E.coli. Cells expressing the gene pair stop dividing and lose membrane integrity. Both proteins are required to kill E.coli. The bGSDM recognition site is larger than the 8 residues surrounding the cleavage site; replacement of the endogenous recognition site by the Runella site (NRVLGENM) in a number of other bGSDMs is not sufficient for them to be cleaved. The polypeptide is Roc-COR-CHAT protease (Runella zeae (strain ATCC BAA-293 / DSM 19591 / LMG 21438 / NS12)).